Here is a 390-residue protein sequence, read N- to C-terminus: Phosphoglycerate kinase (390 aa).

Substrate contacts are provided by residues 19–21 (DYN), arginine 34, 57–60 (HLGR), arginine 115, and arginine 148. Residues lysine 198, glycine 289, glutamate 320, and 347–350 (GGDS) each bind ATP.

Belongs to the phosphoglycerate kinase family. Monomer.

It is found in the cytoplasm. The enzyme catalyses (2R)-3-phosphoglycerate + ATP = (2R)-3-phospho-glyceroyl phosphate + ADP. The protein operates within carbohydrate degradation; glycolysis; pyruvate from D-glyceraldehyde 3-phosphate: step 2/5. This Thermus thermophilus (strain ATCC 27634 / DSM 579 / HB8) protein is Phosphoglycerate kinase (pgk).